Reading from the N-terminus, the 310-residue chain is M1-specific T cell receptor beta chain (310 aa).

The first 21 residues, 1 to 21, serve as a signal peptide directing secretion; that stretch reads MSNQVLCCVVLCLLGANTVDG. The interval 22–114 is t cell receptor beta variable 19; sequence GITQSPKYLF…TAFYLCASSI (93 aa). Residues 34-131 enclose the Ig-like V-type domain; sequence EGQNVTLSCE…FGPGTRLTVT (98 aa). Residue N37 is glycosylated (N-linked (GlcNAc...) asparagine). The cysteines at positions 42 and 110 are disulfide-linked. The interval 46-50 is CDR1; the sequence is LNHDA. D49 contacts a peptide antigen. Positions 68–73 are CDR2; it reads SQIVND. The segment at 110–122 is CDR3; sequence CASSIRSSYEQYF. A t cell receptor beta joining 2-7 region spans residues 117–131; sequence SYEQYFGPGTRLTVT. A t cell receptor beta constant 2 region spans residues 133–310; it reads DLKNVFPPKV…AMVKRKDSRG (178 aa). The region spanning 140–249 is the Ig-like C1-type domain; it reads PKVAVFEPSE…WTQDRAKPVT (110 aa). C162 and C227 are joined by a disulfide. N201 carries N-linked (GlcNAc...) asparagine glycosylation. Positions 262–276 are connecting peptide; sequence CGFTSESYQQGVLSA. The helical transmembrane segment at 277 to 299 threads the bilayer; it reads TILYEILLGKATLYAVLVSALVL. Topologically, residues 300–310 are cytoplasmic; that stretch reads MAMVKRKDSRG.

In terms of assembly, disulfide-linked heterodimer with TRAV27*01J42*01C*01 alpha chain. The TR primarily interacts via its CDR3-beta domain with M/matrix protein 1-derived peptide (GILGFVFTL) displayed by HLA-A*02.01 in a 'peg-notch' recognition mode. The alpha-beta TR associates with the transmembrane signaling CD3 coreceptor proteins to form the TR-CD3 (TCR). The assembly of alpha-beta TR heterodimers with CD3 occurs in the endoplasmic reticulum where a single alpha-beta TR heterodimer associates with one CD3D-CD3E heterodimer, one CD3G-CD3E heterodimer and one CD247 homodimer forming a stable octameric structure. CD3D-CD3E and CD3G-CD3E heterodimers preferentially associate with TR alpha and TR beta chains (via TM domain), respectively. The association of the CD247 homodimer is the last step of TCR assembly in the endoplasmic reticulum and is required for transport to the cell surface. As to expression, expressed in M/matrix protein 1-specific effector memory CD8-positive T cells readily detectable in the peripheral blood, secondary lymphoid organs and lung (primary site of infection) of IAV infected individuals.

It is found in the cell membrane. The beta chain of TRAV27*01J42*01C*01/TRBV19*01J2S7*01C*02 alpha-beta T cell receptor (TR) clonotype that is specific for HLA-A*02:01-restricted M/matrix protein 1 immunodominant epitope GILGFVFTL of influenza A virus (IAV). Classified as a public TCR clonotype, it is preferentially selected in effector memory CD8-positive T cells among multiple HLA-A*02:01 carriers/individuals and confers long-lived immunity against IAV infection. Can cross-recognize sporadically emerging IAV variants by molecular mimicry, inducing immunity toward different influenza strains. Antigen recognition initiates TR-CD3 clustering on the cell surface and intracellular activation of LCK that phosphorylates the ITAM motifs of CD3G, CD3D, CD3E and CD247 enabling the recruitment of ZAP70. In turn, ZAP70 phosphorylates LAT, which recruits numerous signaling molecules to form the LAT signalosome. The LAT signalosome propagates signal branching to three major signaling pathways, the calcium, the mitogen-activated protein kinase (MAPK) kinase and the nuclear factor NF-kappa-B (NF-kB) pathways, leading to the mobilization of transcription factors that are critical for gene expression and essential for T cell differentiation into effector/memory T cells. The polypeptide is M1-specific T cell receptor beta chain (Homo sapiens (Human)).